A 356-amino-acid polypeptide reads, in one-letter code: Pavine N-methyltransferase (356 aa).

S-adenosyl-L-homocysteine contacts are provided by Phe-96, Ser-97, Gly-135, Asn-159, Gln-163, Asp-185, Val-186, and Val-201. Residues Phe-96, Ser-97, Gly-135, Asn-159, Gln-163, Asp-185, Val-186, and Val-201 each contribute to the S-adenosyl-L-methionine site. Residue Glu-205 coordinates (S)-tetrahydropapaverine. Residue Cys-331 is part of the active site.

Belongs to the CFA/CMAS family. Homodimer.

It localises to the cytoplasm. It carries out the reaction (+-)-pavine + S-adenosyl-L-methionine = N-methylpavine + S-adenosyl-L-homocysteine + H(+). The catalysed reaction is (S)-reticuline + S-adenosyl-L-methionine = (S)-tembetarine + S-adenosyl-L-homocysteine + H(+). It catalyses the reaction (S)-stylopine + S-adenosyl-L-methionine = (S)-cis-N-methylstylopine + S-adenosyl-L-homocysteine. The enzyme catalyses (S)-scoulerine + S-adenosyl-L-methionine = (S)-cis-N-methylscoulerine + S-adenosyl-L-homocysteine. It carries out the reaction (S)-tetrahydropapaverine + S-adenosyl-L-methionine = (S)-N-methyltetrahydropapaverine + S-adenosyl-L-homocysteine + H(+). The catalysed reaction is (S)-tetrahydropalmatine + S-adenosyl-L-methionine = (S)-cis-N-methyltetrahydropalmatine + S-adenosyl-L-homocysteine. It participates in alkaloid biosynthesis. With respect to regulation, in the presence of a racemic mixture of tetrahydropapaverine (THP), one molecule of (S)-THP binds in a productive mode, while one molecule of (R)-THP is bound next to it in a non-productive mode. The (R)-THP seems to inhibit the release of products from the enzyme when higher concentrations of the racemic substrate are added to the reaction. Its function is as follows. N-methyltransferase with a substrate preference for (+-)-pavine and (S)-reticuline, but also active with the protoberberines scoulerine and stylopine and, to a lesser extent, tetrahydropapaverine (THP) and tetrahydropalmatine. Is not active on (R)-reticuline, cryptopine, glaucine, codeine, canadaline, noscapine and berbamine. The protein is Pavine N-methyltransferase of Thalictrum flavum subsp. glaucum (Yellow meadow rue).